We begin with the raw amino-acid sequence, 263 residues long: 1-(5-phosphoribosyl)-5-[(5-phosphoribosylamino)methylideneamino] imidazole-4-carboxamide isomerase (263 aa).

This sequence belongs to the HisA/HisF family.

The protein resides in the cytoplasm. The enzyme catalyses 1-(5-phospho-beta-D-ribosyl)-5-[(5-phospho-beta-D-ribosylamino)methylideneamino]imidazole-4-carboxamide = 5-[(5-phospho-1-deoxy-D-ribulos-1-ylimino)methylamino]-1-(5-phospho-beta-D-ribosyl)imidazole-4-carboxamide. It functions in the pathway amino-acid biosynthesis; L-histidine biosynthesis; L-histidine from 5-phospho-alpha-D-ribose 1-diphosphate: step 4/9. The polypeptide is 1-(5-phosphoribosyl)-5-[(5-phosphoribosylamino)methylideneamino] imidazole-4-carboxamide isomerase (HIS6) (Eremothecium gossypii (strain ATCC 10895 / CBS 109.51 / FGSC 9923 / NRRL Y-1056) (Yeast)).